Reading from the N-terminus, the 253-residue chain is Imidazole glycerol phosphate synthase subunit HisF (253 aa).

Active-site residues include aspartate 11 and aspartate 130.

This sequence belongs to the HisA/HisF family. Heterodimer of HisH and HisF.

Its subcellular location is the cytoplasm. It carries out the reaction 5-[(5-phospho-1-deoxy-D-ribulos-1-ylimino)methylamino]-1-(5-phospho-beta-D-ribosyl)imidazole-4-carboxamide + L-glutamine = D-erythro-1-(imidazol-4-yl)glycerol 3-phosphate + 5-amino-1-(5-phospho-beta-D-ribosyl)imidazole-4-carboxamide + L-glutamate + H(+). It participates in amino-acid biosynthesis; L-histidine biosynthesis; L-histidine from 5-phospho-alpha-D-ribose 1-diphosphate: step 5/9. Its function is as follows. IGPS catalyzes the conversion of PRFAR and glutamine to IGP, AICAR and glutamate. The HisF subunit catalyzes the cyclization activity that produces IGP and AICAR from PRFAR using the ammonia provided by the HisH subunit. The protein is Imidazole glycerol phosphate synthase subunit HisF of Geobacter metallireducens (strain ATCC 53774 / DSM 7210 / GS-15).